Reading from the N-terminus, the 130-residue chain is MARLNPIADAMSTIKNAGDAGKGEVIVEPASKLLGAMLRVMQENGFISGFEFIDDGRGGQFRVQLSGTINKCGAISPRFPVAMADMEYWESQYLPAKNFGILIVSTSKGVISHAEARNEGIGGQLLGYVY.

This sequence belongs to the universal ribosomal protein uS8 family. In terms of assembly, part of the 30S ribosomal subunit.

Its function is as follows. One of the primary rRNA binding proteins, it binds directly to 16S rRNA central domain where it helps coordinate assembly of the platform of the 30S subunit. The sequence is that of Small ribosomal subunit protein uS8 from Methanoculleus marisnigri (strain ATCC 35101 / DSM 1498 / JR1).